An 8797-amino-acid polypeptide reads, in one-letter code: Nesprin-1 (8797 aa).

Residues 1–289 (MATSRGASRC…KHYPDIHNAS (289 aa)) form an actin-binding region. Residues 1–8746 (MATSRGASRC…GRGFLFRVLR (8746 aa)) are Cytoplasmic-facing. Calponin-homology (CH) domains lie at 27–134 (IVQK…LYFQ) and 178–283 (GNAK…KHYP). Spectrin repeat units lie at residues 314–397 (REDR…SRLF), 398–502 (DWHI…HLMK), 503–609 (MEFL…SMLE), 610–703 (EVIS…YAQA), 704–815 (DEMD…QLLI), 816–923 (PLEE…KHVE), 924–1024 (TNSR…HLKI), 1025–1122 (DVEK…LMED), 1123–1246 (PDKW…NSLE), 1247–1335 (ELIS…ERRI), 1336–1444 (QVTL…MEMV), 1445–1550 (KTKW…ILGH), 1551–1653 (LSQQ…LENL), 1654–1763 (LAHW…LQSV), 1764–1879 (VAEH…SHAS), 1880–1976 (LSGI…ADAL), 1977–2081 (AVLK…QGQC), 2082–2195 (CGLI…LRVS), 2196–2303 (LSIW…KDFT), 2304–2401 (AQST…KTQA), 2402–2513 (SLQE…LQDC), 2514–2619 (ASEL…LRSC), 2620–2731 (QVAL…LESV), 2732–2838 (ISQW…VEEI), 2839–2962 (VKDH…SGQV), 2963–3062 (AQLE…QNKE), 3063–3171 (QILQ…LENL), 3172–3275 (KIQM…VSRL), 3276–3387 (DRIV…LEGA), 3388–3490 (LSKW…SEKL), 3491–3593 (VRLH…RTQF), 3594–3720 (NNVV…YSDW), 3721–3814 (YGST…LEKG), 3815–3920 (LHLA…LEAK), 3921–4028 (VKDH…QRMY), 4029–4139 (QSLE…KHLK), 4140–4235 (SELW…REED), 4236–4339 (LQRT…IQVS), 4340–4451 (VTNL…LNKA), 4452–4560 (LSEK…LEKN), 4561–4669 (LVSR…VQEA), 4670–4776 (ILAR…LEDT), 4777–4882 (TSAY…CESR), 4883–4991 (MVQS…LTEI), 4992–5099 (YSQC…LQRC), 5100–5209 (TAQW…LEDA), 5210–5318 (VDEW…GKLV), 5319–5424 (KQEL…EQSK), 5425–5522 (ATSQ…LSKL), 5523–5630 (NQAA…LQDA), 5631–5736 (AKDM…MQEA), and 5737–5842 (VVQY…PSAH). Positions 314 to 8666 (REDRVIFKEM…EKLLDVSSSQ (8353 aa)) form a coiled coil. S732 carries the post-translational modification Phosphoserine. Phosphothreonine is present on T2270. At S5657 the chain carries Phosphoserine. The segment at 5859–5886 (PVTEESGEEGTNSEISSPPACRSPSPVA) is disordered. Spectrin repeat units lie at residues 5962 to 6071 (LERQ…LEEK), 6072 to 6178 (LNDQ…SLLE), 6374 to 6485 (RQSI…RLQQ), 6486 to 6581 (ILNF…RSGL), 6582 to 6691 (NQNL…LETW), 6692 to 6795 (SHLD…TILK), 6796 to 6902 (HWTR…QEKL), 6903 to 7020 (HQLQ…LEGL), 7021 to 7128 (LESW…LKSV), 7129 to 7237 (LDQW…SKAL), 7238 to 7350 (LQLW…LQAG), 7351 to 7454 (VLDY…LQSF), 7455 to 7558 (LLQH…RGII), 7559 to 7671 (DSQI…LAFL), 7672 to 7783 (LKDW…NEWA), 7784 to 7883 (VFSE…LKET), 7884 to 7997 (LVAV…IEET), 7998 to 8106 (WRLW…LKHF), and 8107 to 8216 (IGQR…LPLP). S8223 is modified (phosphoserine). The disordered stretch occupies residues 8246–8279 (DSLLSPQPSSNLSLSLAQPLRSERSGRDTPASVD). A compositionally biased stretch (low complexity) spans 8247–8265 (SLLSPQPSSNLSLSLAQPL). T8274 carries the post-translational modification Phosphothreonine. S8277, S8280, and S8305 each carry phosphoserine. Spectrin repeat units follow at residues 8329–8438 (SALE…MKQN), 8439–8548 (LQKW…LQDA), and 8549–8666 (LMQC…SSSQ). The residue at position 8360 (T8360) is a Phosphothreonine. Residues 8671–8734 (SWSSADELDT…DSSLSEPGPG (64 aa)) are disordered. Composition is skewed to polar residues over residues 8680 to 8696 (TSGSVSPTSGRSTPNRQ) and 8704 to 8729 (SLSQPGPSVSSPHSRSTKGGSDSSLS). The 60-residue stretch at 8738–8797 (RGFLFRVLRAALPLQLLLLLLIGLACLVPMSEEDYSCALSNNFARSFHPMLRYTNGPPPL) folds into the KASH domain. A helical; Anchor for type IV membrane protein membrane pass occupies residues 8747-8767 (AALPLQLLLLLLIGLACLVPM). Topologically, residues 8768–8797 (SEEDYSCALSNNFARSFHPMLRYTNGPPPL) are perinuclear space.

This sequence belongs to the nesprin family. Core component of LINC complexes which are composed of inner nuclear membrane SUN domain-containing proteins coupled to outer nuclear membrane KASH domain-containing nesprins. SUN and KASH domain-containing proteins seem to bind each other promiscuously; however, differentially expression of LINC complex constituents can give rise to specific assemblies. At least SUN1/2-containing core LINC complexes are proposed to be hexameric composed of three protomers of each KASH and SUN domain-containing protein. The SUN2:SYNE1/KASH1 LINC complex is a heterohexamer; the homotrimeric cloverleave-like conformation of the SUN domain is a prerequisite for LINC complex formation in which three separate SYNE1/KASH1 peptides bind at the interface of adjacent SUN domains. Self-associates. Interacts with SYNE3. Interacts with SPAG4/SUN4. May interact with MUSK. Interacts with F-actin via its N-terminal domain. Interacts with EMD and LMNA in vitro. Interacts (via KASH domain) with TMEM258. In terms of processing, the disulfid bond with SUN1 or SUN2 is required for stability of the respective LINC complex under tensile forces. In terms of tissue distribution, expressed in HeLa, A431, A172 and HaCaT cells (at protein level). Widely expressed. Highly expressed in skeletal and smooth muscles, heart, spleen, peripheral blood leukocytes, pancreas, cerebellum, stomach, kidney and placenta. Isoform GSRP-56 is predominantly expressed in heart and skeletal muscle (at protein level).

It localises to the nucleus outer membrane. Its subcellular location is the nucleus. The protein resides in the nucleus envelope. The protein localises to the cytoplasm. It is found in the cytoskeleton. It localises to the myofibril. Its subcellular location is the sarcomere. The protein resides in the golgi apparatus. Functionally, multi-isomeric modular protein which forms a linking network between organelles and the actin cytoskeleton to maintain the subcellular spatial organization. As a component of the LINC (LInker of Nucleoskeleton and Cytoskeleton) complex involved in the connection between the nuclear lamina and the cytoskeleton. The nucleocytoplasmic interactions established by the LINC complex play an important role in the transmission of mechanical forces across the nuclear envelope and in nuclear movement and positioning. May be involved in nucleus-centrosome attachment and nuclear migration in neural progenitors implicating LINC complex association with SUN1/2 and probably association with cytoplasmic dynein-dynactin motor complexes; SYNE1 and SYNE2 may act redundantly. Required for centrosome migration to the apical cell surface during early ciliogenesis. May be involved in nuclear remodeling during sperm head formation in spermatogenesis; a probable SUN3:SYNE1/KASH1 LINC complex may tether spermatid nuclei to posterior cytoskeletal structures such as the manchette. The protein is Nesprin-1 of Homo sapiens (Human).